The primary structure comprises 182 residues: DOMON domain-containing protein Y73F4A.1 (182 aa).

The signal sequence occupies residues M1–S18. The 118-residue stretch at E26 to G143 folds into the DOMON domain. N-linked (GlcNAc...) asparagine glycans are attached at residues N47 and N128.

It localises to the secreted. The polypeptide is DOMON domain-containing protein Y73F4A.1 (Caenorhabditis elegans).